The following is a 212-amino-acid chain: Orotate phosphoribosyltransferase (212 aa).

Residues Arg-97, Lys-101, His-103, and 123 to 131 contribute to the 5-phospho-alpha-D-ribose 1-diphosphate site; that span reads EDLISTGGS. Residue Ser-127 coordinates orotate.

The protein belongs to the purine/pyrimidine phosphoribosyltransferase family. PyrE subfamily. In terms of assembly, homodimer. Requires Mg(2+) as cofactor.

It catalyses the reaction orotidine 5'-phosphate + diphosphate = orotate + 5-phospho-alpha-D-ribose 1-diphosphate. Its pathway is pyrimidine metabolism; UMP biosynthesis via de novo pathway; UMP from orotate: step 1/2. In terms of biological role, catalyzes the transfer of a ribosyl phosphate group from 5-phosphoribose 1-diphosphate to orotate, leading to the formation of orotidine monophosphate (OMP). This Phocaeicola vulgatus (strain ATCC 8482 / DSM 1447 / JCM 5826 / CCUG 4940 / NBRC 14291 / NCTC 11154) (Bacteroides vulgatus) protein is Orotate phosphoribosyltransferase.